The primary structure comprises 349 residues: N-acetyltaurine hydrolase (349 aa).

A divalent metal cation-binding residues include His26, His28, Glu169, His201, His230, and Asp298.

The protein belongs to the metallo-dependent hydrolases superfamily. Phosphotriesterase family. A divalent metal cation is required as a cofactor. As to expression, expressed primarily in proximal tubules of the kidney.

It localises to the cytoplasm. Its subcellular location is the cytosol. It catalyses the reaction N-acetyltaurine + H2O = taurine + acetate. It carries out the reaction N-propanoyltaurine + H2O = propanoate + taurine. The catalysed reaction is N-acetyl-L-methionine + H2O = L-methionine + acetate. The enzyme catalyses N-acetyl-L-isoleucine + H2O = L-isoleucine + acetate. It catalyses the reaction N-acetyl-L-leucine + H2O = L-leucine + acetate. It carries out the reaction N-acetyl-L-valine + H2O = L-valine + acetate. N-acetyltaurine hydrolase that regulates feeding by catalyzing the hydrolysis of N-acetyltaurine into taurine and acetate. N-acetyltaurine has anorexigenic and anti-obesity effects that are dependent on GFRAL receptor and GDF15. PTER also acts on other N-acetyl amino acids (Met, Ile, Leu, Val) and N-propionyltaurine, but at lower rates. Binds resiniferotoxin, a vanilloid that desensitizes nociceptive neurons. The chain is N-acetyltaurine hydrolase from Rattus norvegicus (Rat).